The primary structure comprises 321 residues: Thymidylate synthase (321 aa).

Positions 1–32 (MVLTPTKDGPDQESMPLPADNGESPSKQQAPV) are disordered. 2 positions are modified to phosphoserine: Ser-24 and Ser-26. Phosphotyrosine is present on Tyr-39. DUMP is bound by residues Arg-56 and 181–182 (RR). Cys-201 acts as the Nucleophile in catalysis. Tyr-208 bears the Phosphotyrosine mark. Ser-210 carries the post-translational modification Phosphoserine. DUMP-binding positions include 223–226 (RSAD), Asn-234, and 264–266 (HVY). Position 226 (Asp-226) interacts with (6R)-5,10-methylene-5,6,7,8-tetrahydrofolate. Ala-320 is a binding site for (6R)-5,10-methylene-5,6,7,8-tetrahydrofolate.

This sequence belongs to the thymidylate synthase family. As to quaternary structure, homodimer.

The enzyme catalyses dUMP + (6R)-5,10-methylene-5,6,7,8-tetrahydrofolate = 7,8-dihydrofolate + dTMP. The protein operates within pyrimidine metabolism; dTTP biosynthesis. This Drosophila melanogaster (Fruit fly) protein is Thymidylate synthase (Ts).